Reading from the N-terminus, the 357-residue chain is EGF-like domain-containing protein 2 (357 aa).

Positions 1-20 are cleaved as a signal peptide; the sequence is MPPSLSHLFLLSTFASLALC. EGF-like domains lie at 21–55 and 61–93; these read SFYC…FNCG and ISAA…PTCQ. 6 cysteine pairs are disulfide-bonded: cysteine 24/cysteine 37, cysteine 31/cysteine 43, cysteine 45/cysteine 54, cysteine 65/cysteine 75, cysteine 69/cysteine 81, and cysteine 83/cysteine 92.

In terms of tissue distribution, prismatic layer of shell (at protein level). Expressed primarily in the mantle with highest level in the mantle edge and lower level in the mantle pallium.

The protein localises to the secreted. This is EGF-like domain-containing protein 2 from Pinctada maxima (Silver-lipped pearl oyster).